We begin with the raw amino-acid sequence, 399 residues long: Carbamoyl phosphate synthase small chain (399 aa).

The tract at residues 1–209 is CPSase; sequence MEKFKLLKLG…SAINKKLHTS (209 aa). Positions 55, 261, and 263 each coordinate L-glutamine. A Glutamine amidotransferase type-1 domain is found at 213–399; it reads RIIVLDLGVK…VYIIYKSKSS (187 aa). The active-site Nucleophile is cysteine 289. L-glutamine is bound by residues leucine 290, glutamine 293, asparagine 329, glycine 331, and phenylalanine 332. Residues histidine 372 and glutamate 374 contribute to the active site.

The protein belongs to the CarA family. In terms of assembly, composed of two chains; the small (or glutamine) chain promotes the hydrolysis of glutamine to ammonia, which is used by the large (or ammonia) chain to synthesize carbamoyl phosphate. Tetramer of heterodimers (alpha,beta)4.

Its subcellular location is the plastid. The protein localises to the chloroplast. The catalysed reaction is hydrogencarbonate + L-glutamine + 2 ATP + H2O = carbamoyl phosphate + L-glutamate + 2 ADP + phosphate + 2 H(+). It catalyses the reaction L-glutamine + H2O = L-glutamate + NH4(+). Its pathway is amino-acid biosynthesis; L-arginine biosynthesis; carbamoyl phosphate from bicarbonate: step 1/1. It participates in pyrimidine metabolism; UMP biosynthesis via de novo pathway; (S)-dihydroorotate from bicarbonate: step 1/3. Its function is as follows. Small subunit of the glutamine-dependent carbamoyl phosphate synthetase (CPSase). CPSase catalyzes the formation of carbamoyl phosphate from the ammonia moiety of glutamine, carbonate, and phosphate donated by ATP, constituting the first step of 2 biosynthetic pathways, one leading to arginine and/or urea and the other to pyrimidine nucleotides. The small subunit (glutamine amidotransferase) binds and cleaves glutamine to supply the large subunit with the substrate ammonia. This is Carbamoyl phosphate synthase small chain from Cyanidium caldarium (Red alga).